The primary structure comprises 327 residues: Transaldolase (327 aa).

Residue Lys132 is the Schiff-base intermediate with substrate of the active site.

It belongs to the transaldolase family. Type 1 subfamily.

The protein resides in the cytoplasm. It carries out the reaction D-sedoheptulose 7-phosphate + D-glyceraldehyde 3-phosphate = D-erythrose 4-phosphate + beta-D-fructose 6-phosphate. It participates in carbohydrate degradation; pentose phosphate pathway; D-glyceraldehyde 3-phosphate and beta-D-fructose 6-phosphate from D-ribose 5-phosphate and D-xylulose 5-phosphate (non-oxidative stage): step 2/3. Its function is as follows. Transaldolase is important for the balance of metabolites in the pentose-phosphate pathway. The sequence is that of Transaldolase from Chlamydia trachomatis serovar D (strain ATCC VR-885 / DSM 19411 / UW-3/Cx).